The chain runs to 121 residues: MKIVISKPDKNKIRQKRHRRVRGKLSGTADRPRLNVFRSNTGIYAQVIDDVAGVTLASASTLDKEVSKGTKTEQAVVVGKLVAERAVAKGISEVVFDRGGYLYHGRVKALADAARENGLKF.

Belongs to the universal ribosomal protein uL18 family. In terms of assembly, part of the 50S ribosomal subunit; part of the 5S rRNA/L5/L18/L25 subcomplex. Contacts the 5S and 23S rRNAs.

Functionally, this is one of the proteins that bind and probably mediate the attachment of the 5S RNA into the large ribosomal subunit, where it forms part of the central protuberance. This chain is Large ribosomal subunit protein uL18, found in Streptococcus equi subsp. zooepidemicus (strain MGCS10565).